A 161-amino-acid chain; its full sequence is Blue copper protein 1a (161 aa).

Positions 1 to 23 (MASSRVVLILSISMVLLSSVAIA) are cleaved as a signal peptide. Positions 24–124 (TDHIVGDDKG…QMKLVITVLA (101 aa)) constitute a Phytocyanin domain. His64 contacts Cu cation. Asn70 carries an N-linked (GlcNAc...) asparagine glycan. Residues Cys77 and Cys111 are joined by a disulfide bond. Cu cation is bound by residues Cys105, His110, and Met116. The chain crosses the membrane as a helical span at residues 141–161 (VVSSLFGVVMAIMVAIAVIFA).

The protein resides in the membrane. This chain is Blue copper protein 1a, found in Medicago truncatula (Barrel medic).